Here is a 950-residue protein sequence, read N- to C-terminus: A disintegrin and metalloproteinase with thrombospondin motifs 15 (950 aa).

The signal sequence occupies residues M1–G17. A propeptide spanning residues G18–R212 is cleaved from the precursor. N-linked (GlcNAc...) asparagine glycosylation occurs at N141. A disordered region spans residues S151 to S172. A Cysteine switch motif is present at residues S172–G179. C174 is a Zn(2+) binding site. Residues R218–P427 enclose the Peptidase M12B domain. 11 cysteine pairs are disulfide-bonded: C293–C345, C322–C327, C339–C422, C377–C406, C448–C470, C459–C480, C465–C499, C493–C504, C528–C565, C532–C570, and C543–C555. A Zn(2+)-binding site is contributed by H361. The active site involves E362. Zn(2+) is bound by residues H365 and H371. In terms of domain architecture, Disintegrin spans S428 to V515. Residues D516–P571 form the TSP type-1 1 domain. N-linked (GlcNAc...) asparagine glycosylation is found at N591, N623, and N679. A spacer region spans residues A701–R838. Residues F798–H822 form a disordered region. Residues K802–R816 are compositionally biased toward basic and acidic residues. TSP type-1 domains are found at residues P839–P895 and T896–P949.

The cofactor is Zn(2+). The precursor is cleaved by a furin endopeptidase. Post-translationally, glycosylated. Can be O-fucosylated by POFUT2 on a serine or a threonine residue found within the consensus sequence C1-X(2)-(S/T)-C2-G of the TSP type-1 repeat domains where C1 and C2 are the first and second cysteine residue of the repeat, respectively. Fucosylated repeats can then be further glycosylated by the addition of a beta-1,3-glucose residue by the glucosyltransferase, B3GALTL. Fucosylation mediates the efficient secretion of ADAMTS family members. Can be C-glycosylated with one or two mannose molecules on tryptophan residues within the consensus sequence W-X-X-W of the TPRs. Also N-glycosylated. These other glycosylations can also facilitate secretion. As to expression, expressed in fetal liver and kidney, but not in any of the adult tissues examined.

The protein localises to the secreted. It is found in the extracellular space. Its subcellular location is the extracellular matrix. The protein resides in the cell surface. In terms of biological role, metalloprotease which has proteolytic activity against the proteoglycan VCAN, cleaving it at the 'Glu-1428-|-1429-Ala' site. Cleaves VCAN in the pericellular matrix surrounding myoblasts, facilitating myoblast contact and fusion which is required for skeletal muscle development and regeneration. The chain is A disintegrin and metalloproteinase with thrombospondin motifs 15 (ADAMTS15) from Homo sapiens (Human).